A 1375-amino-acid chain; its full sequence is DNA-directed RNA polymerase subunit beta' (1375 aa).

Positions 70, 72, 85, and 88 each coordinate Zn(2+). D460, D462, and D464 together coordinate Mg(2+). Residues C800, C874, C881, and C884 each contribute to the Zn(2+) site.

The protein belongs to the RNA polymerase beta' chain family. In terms of assembly, the RNAP catalytic core consists of 2 alpha, 1 beta, 1 beta' and 1 omega subunit. When a sigma factor is associated with the core the holoenzyme is formed, which can initiate transcription. It depends on Mg(2+) as a cofactor. The cofactor is Zn(2+).

The enzyme catalyses RNA(n) + a ribonucleoside 5'-triphosphate = RNA(n+1) + diphosphate. Its function is as follows. DNA-dependent RNA polymerase catalyzes the transcription of DNA into RNA using the four ribonucleoside triphosphates as substrates. This is DNA-directed RNA polymerase subunit beta' from Bdellovibrio bacteriovorus (strain ATCC 15356 / DSM 50701 / NCIMB 9529 / HD100).